The sequence spans 513 residues: Cytochrome P450 705A1 (513 aa).

Residues 9-29 (QNCFIIILLCSFSLISYFVFF) form a helical membrane-spanning segment. C448 is a heme binding site.

Belongs to the cytochrome P450 family. Heme serves as cofactor. As to expression, expressed in root stele, root cortex, root epidermis, root pericycle of the root hair zone, and quiescent center at the root meristematic zone.

It is found in the membrane. Cleaves the arabidiol side chain at C15 to form 14-apo-arabidiol and a side-chain fragment. Involved in the biosynthesis of the volatile homoterpene (E)-4,8-dimethyl-1,3,7-nonatriene (DMNT) in roots. Involved in the production of DMNT by degrading the triterpene arabidiol. May be involved in the defense again the fungal root pathogen Pythium irregulare by producing DMNT. The sequence is that of Cytochrome P450 705A1 from Arabidopsis thaliana (Mouse-ear cress).